A 149-amino-acid chain; its full sequence is Oligosaccharyltransferase complex subunit OSTC (149 aa).

The Cytoplasmic segment spans residues 1 to 32 (METLYRVPFLVLECPNLKLKKPPWVHMPSAMT). Residues 33-53 (VYALVVVSYFLITGGIIYDVI) form a helical membrane-spanning segment. At 54–83 (VEPPSVGSMTDEHGHQRPVAFLAYRVNGQY) the chain is on the extracellular side. A helical transmembrane segment spans residues 84 to 104 (IMEGLASSFLFTMGGLGFIIL). Residues 105–117 (DRSNAPNIPKLNR) are Cytoplasmic-facing. The helical transmembrane segment at 118-138 (FLLLFIGFVCVLLSFFMARVF) threads the bilayer. Residues 139-149 (MRMKLPGYLMG) lie on the Extracellular side of the membrane.

It belongs to the OSTC family. Component of STT3A-containing oligosaccharyl transferase (OST-A) complex. STT3A-containing complex assembly occurs through the formation of 3 subcomplexes. Subcomplex 1 contains RPN1 and TMEM258, subcomplex 2 contains the STT3A-specific subunits STT3A, DC2/OSTC, and KCP2 as well as the core subunit OST4, and subcomplex 3 contains RPN2, DAD1, and OST48. The OST-A complex can form stable complexes with the Sec61 complex or with both the Sec61 and TRAP complexes. Interacts with PSEN1 and NCSTN; indicative for an association with the gamma-secretase complex.

The protein localises to the endoplasmic reticulum. It is found in the membrane. Its pathway is protein modification; protein glycosylation. In terms of biological role, subunit of STT3A-containing oligosaccharyl transferase (OST-A) complex that catalyzes the initial transfer of a defined glycan (Glc(3)Man(9)GlcNAc(2) in eukaryotes) from the lipid carrier dolichol-pyrophosphate to an asparagine residue within an Asn-X-Ser/Thr consensus motif in nascent polypeptide chains, the first step in protein N-glycosylation. N-glycosylation occurs cotranslationally and the complex associates with the Sec61 complex at the channel-forming translocon complex that mediates protein translocation across the endoplasmic reticulum (ER). Within the OST-A complex, acts as an adapter that anchors the OST-A complex to the Sec61 complex. May be involved in N-glycosylation of APP (amyloid-beta precursor protein). Can modulate gamma-secretase cleavage of APP by enhancing endoprotelysis of PSEN1. This chain is Oligosaccharyltransferase complex subunit OSTC, found in Canis lupus familiaris (Dog).